We begin with the raw amino-acid sequence, 529 residues long: Bifunctional purine biosynthesis protein PurH (529 aa).

The region spanning M1–V148 is the MGS-like domain.

The protein belongs to the PurH family.

The enzyme catalyses (6R)-10-formyltetrahydrofolate + 5-amino-1-(5-phospho-beta-D-ribosyl)imidazole-4-carboxamide = 5-formamido-1-(5-phospho-D-ribosyl)imidazole-4-carboxamide + (6S)-5,6,7,8-tetrahydrofolate. It carries out the reaction IMP + H2O = 5-formamido-1-(5-phospho-D-ribosyl)imidazole-4-carboxamide. Its pathway is purine metabolism; IMP biosynthesis via de novo pathway; 5-formamido-1-(5-phospho-D-ribosyl)imidazole-4-carboxamide from 5-amino-1-(5-phospho-D-ribosyl)imidazole-4-carboxamide (10-formyl THF route): step 1/1. It participates in purine metabolism; IMP biosynthesis via de novo pathway; IMP from 5-formamido-1-(5-phospho-D-ribosyl)imidazole-4-carboxamide: step 1/1. The sequence is that of Bifunctional purine biosynthesis protein PurH from Klebsiella pneumoniae subsp. pneumoniae (strain ATCC 700721 / MGH 78578).